The sequence spans 375 residues: Succinyl-diaminopimelate desuccinylase (375 aa).

Histidine 66 is a binding site for Zn(2+). Residue aspartate 68 is part of the active site. Aspartate 99 contacts Zn(2+). Glutamate 133 acts as the Proton acceptor in catalysis. Zn(2+) is bound by residues glutamate 134, glutamate 162, and histidine 348.

This sequence belongs to the peptidase M20A family. DapE subfamily. As to quaternary structure, homodimer. Zn(2+) serves as cofactor. The cofactor is Co(2+).

The enzyme catalyses N-succinyl-(2S,6S)-2,6-diaminopimelate + H2O = (2S,6S)-2,6-diaminopimelate + succinate. The protein operates within amino-acid biosynthesis; L-lysine biosynthesis via DAP pathway; LL-2,6-diaminopimelate from (S)-tetrahydrodipicolinate (succinylase route): step 3/3. Its function is as follows. Catalyzes the hydrolysis of N-succinyl-L,L-diaminopimelic acid (SDAP), forming succinate and LL-2,6-diaminopimelate (DAP), an intermediate involved in the bacterial biosynthesis of lysine and meso-diaminopimelic acid, an essential component of bacterial cell walls. The polypeptide is Succinyl-diaminopimelate desuccinylase (Escherichia coli O157:H7).